The chain runs to 121 residues: Flagellar protein FliT (121 aa).

The tract at residues 1-50 (MNNAPHLYFAWQQLVEKSQLMLRLATEEQWDELIASEMAYVNAVQEIAHL) is required for homodimerization. The segment at 60-98 (MQEQLRPMLRLILDNESKVKQLLQIRMDELAKLVGQSSV) is fliD binding.

This sequence belongs to the FliT family. In terms of assembly, homodimer. Interacts with FliD and FlhC.

The protein resides in the cytoplasm. The protein localises to the cytosol. Dual-function protein that regulates the transcription of class 2 flagellar operons and that also acts as an export chaperone for the filament-capping protein FliD. As a transcriptional regulator, acts as an anti-FlhDC factor; it directly binds FlhC, thus inhibiting the binding of the FlhC/FlhD complex to class 2 promoters, resulting in decreased expression of class 2 flagellar operons. As a chaperone, effects FliD transition to the membrane by preventing its premature polymerization, and by directing it to the export apparatus. This Escherichia coli O9:H4 (strain HS) protein is Flagellar protein FliT.